A 376-amino-acid chain; its full sequence is Serpin B6 (376 aa).

Met-1 carries the N-acetylmethionine modification. The residue at position 151 (Ser-151) is a Phosphoserine. Lys-195 is modified (N6-acetyllysine).

Belongs to the serpin family. Ov-serpin subfamily. As to quaternary structure, forms a complex with the monomeric form of beta-tryptase.

The protein resides in the cytoplasm. Its function is as follows. Inhibitor of cathepsin G, kallikrein-8 and thrombin. May play an important role in the inner ear in the protection against leakage of lysosomal content during stress. May be involved in the regulation of serine proteinases present in the brain or extravasated from the blood. The protein is Serpin B6 (SERPINB6) of Macaca fascicularis (Crab-eating macaque).